The following is a 1019-amino-acid chain: Macrophage colony-stimulating factor 1 receptor 2 (1019 aa).

Residues 1–18 (MKSYCLLLSITLSCCCSA) form the signal peptide. The Extracellular portion of the chain corresponds to 19–576 (EDLPDPPSIH…LREHNSAFMS (558 aa)). Ig-like C2-type domains follow at residues 37 to 109 (QAEA…IHLY), 106 to 212 (IHLY…LLVA), and 224 to 312 (QNKA…LIVL). A disulfide bridge connects residues Cys-52 and Cys-92. N-linked (GlcNAc...) asparagine glycans are attached at residues Asn-96, Asn-148, Asn-169, Asn-249, Asn-342, Asn-346, Asn-355, Asn-369, Asn-379, Asn-408, Asn-422, Asn-429, Asn-433, and Asn-514. Disulfide bonds link Cys-139–Cys-193 and Cys-239–Cys-294. Ig-like C2-type domains are found at residues 383-474 (STTV…LRIY) and 487-567 (TLTC…VFHL). Cys-490 and Cys-552 are disulfide-bonded. A helical membrane pass occupies residues 577–597 (ALIGAGSTAAILFLLLLVVFY). Topologically, residues 598 to 1019 (KWRQKPKYEI…LSVTNIYQLS (422 aa)) are cytoplasmic. Residues 601-633 (QKPKYEIRWKIIESTEGNHYTFVDPTLLPYNYK) form a regulatory juxtamembrane domain region. Position 620 is a phosphotyrosine; by autocatalysis (Tyr-620). One can recognise a Protein kinase domain in the interval 641–963 (LRLGAVLGSG…MICQLIDRLL (323 aa)). Residues 647–655 (LGSGAFGKV) and Lys-674 contribute to the ATP site. 2 positions are modified to phosphotyrosine; by autocatalysis: Tyr-756 and Tyr-778. Asp-827 acts as the Proton acceptor in catalysis. Positions 845–867 (DFGLARDIQNDDSYIVQGNARLP) are activation loop. 2 positions are modified to phosphotyrosine; by autocatalysis: Tyr-858 and Tyr-974. A disordered region spans residues 970-1001 (NHQSYSNINETKKDDFKGGKSQRRGEEEEQRR). Basic and acidic residues predominate over residues 979–1001 (ETKKDDFKGGKSQRRGEEEEQRR). At Tyr-1016 the chain carries Phosphotyrosine; by autocatalysis.

Belongs to the protein kinase superfamily. Tyr protein kinase family. CSF-1/PDGF receptor subfamily. As to quaternary structure, monomer. Homodimer. Interacts with CSF1. Autophosphorylated in response to CSF1 binding. autophosphorylation, leading to its degradation. In terms of processing, ubiquitinated. Becomes rapidly polyubiquitinated after autophosphorylation, leading to its degradation.

It is found in the cell membrane. It carries out the reaction L-tyrosyl-[protein] + ATP = O-phospho-L-tyrosyl-[protein] + ADP + H(+). Its activity is regulated as follows. Present in an inactive conformation in the absence of bound ligand. CSF1 binding leads to dimerization and activation by autophosphorylation on tyrosine residues. Functionally, tyrosine-protein kinase that acts as a cell-surface receptor for CSF1 and plays an essential role in the regulation of survival, proliferation and differentiation of hematopoietic precursor cells, especially mononuclear phagocytes, such as macrophages and monocytes. Plays an important role in innate immunity and in inflammatory processes. Plays an important role in the regulation of osteoclast proliferation and differentiation, the regulation of bone resorption, and is required for normal bone development. Promotes reorganization of the actin cytoskeleton, regulates formation of membrane ruffles, cell adhesion and cell migration. Activates several signaling pathways in response to ligand binding. The sequence is that of Macrophage colony-stimulating factor 1 receptor 2 (csf1r2) from Takifugu rubripes (Japanese pufferfish).